We begin with the raw amino-acid sequence, 426 residues long: Glutamate-1-semialdehyde 2,1-aminomutase (426 aa).

Residue K265 is modified to N6-(pyridoxal phosphate)lysine.

The protein belongs to the class-III pyridoxal-phosphate-dependent aminotransferase family. HemL subfamily. Homodimer. Requires pyridoxal 5'-phosphate as cofactor.

The protein resides in the cytoplasm. It catalyses the reaction (S)-4-amino-5-oxopentanoate = 5-aminolevulinate. It functions in the pathway porphyrin-containing compound metabolism; protoporphyrin-IX biosynthesis; 5-aminolevulinate from L-glutamyl-tRNA(Glu): step 2/2. This chain is Glutamate-1-semialdehyde 2,1-aminomutase, found in Pectobacterium atrosepticum (strain SCRI 1043 / ATCC BAA-672) (Erwinia carotovora subsp. atroseptica).